Reading from the N-terminus, the 206-residue chain is Protein Nef (206 aa).

A lipid anchor (N-myristoyl glycine; by host) is attached at G2. At S6 the chain carries Phosphoserine; by host. Residues 62–65 (EEEK) are acidic; interacts with host PACS1 and PACS2; stabilizes the interaction of NEF/MHC-I with host AP1M1; necessary for MHC-I internalization. The SH3-binding; interaction with Src family tyrosine kinases stretch occupies residues 69 to 78 (PVTPQVPLRP). Positions 72–75 (PQVP) match the PxxP; stabilizes the interaction of NEF/MHC-I with host AP1M1; necessary for MHC-I internalization motif. A mediates dimerization, Nef-PTE1 interaction region spans residues 108–124 (DILDLWIYHTQGYFPDW). The binding to ATP6V1H stretch occupies residues 148–180 (VEPEKLEEANKGENTSLLHPVSLHGMDDPEREV). A Dileucine internalization motif; necessary for CD4 internalization motif is present at residues 164-165 (LL). A Diacidic; necessary for CD4 internalization motif is present at residues 174 to 175 (DD).

Belongs to the lentivirus primate group Nef protein family. Monomer; cytosolic form. Homodimer; membrane bound form. Interacts with Nef associated p21-activated kinase (PAK2); this interaction activates PAK2. Associates with the Nef-MHC-I-AP1 complex; this complex is required for MHC-I internalization. Interacts (via C-terminus) with host PI3-kinase. Interacts with host PACS1; this interaction seems to be weak. Interacts with host PACS2. Interacts with host LCK and MAPK3; these interactions inhibit the kinase activity of the latter. Interacts with host ATP6V1H; this interaction may play a role in CD4 endocytosis. Associates with the CD4-Nef-AP2 complex; this complex is required for CD4 internalization. Interacts with host AP2 subunit alpha and AP2 subunit sigma2. Interacts with TCR-zeta chain; this interaction up-regulates the Fas ligand (FasL) surface expression. Interacts with host HCK, LYN, and SRC; these interactions activate the Src family kinases. Interacts with MAP3K5; this interaction inhibits the Fas and TNFR-mediated death signals. Interacts with beta-COP and PTE1. Interacts with human RACK1; this increases Nef phosphorylation by PKC. Interacts with TP53; this interaction decreases the half-life of TP53, protecting the infected cell against p53-mediated apoptosis. The virion-associated Nef proteins are cleaved by the viral protease to release the soluble C-terminal core protein. Nef is probably cleaved concomitantly with viral structural proteins on maturation of virus particles. Post-translationally, myristoylated. In terms of processing, phosphorylated on serine residues, probably by host PKCdelta and theta.

Its subcellular location is the host cell membrane. The protein resides in the virion. The protein localises to the secreted. It localises to the host Golgi apparatus membrane. Functionally, factor of infectivity and pathogenicity, required for optimal virus replication. Alters numerous pathways of T-lymphocyte function and down-regulates immunity surface molecules in order to evade host defense and increase viral infectivity. Alters the functionality of other immunity cells, like dendritic cells, monocytes/macrophages and NK cells. In infected CD4(+) T-lymphocytes, down-regulates the surface MHC-I, mature MHC-II, CD4, CD28, CCR5 and CXCR4 molecules. Mediates internalization and degradation of host CD4 through the interaction of with the cytoplasmic tail of CD4, the recruitment of AP-2 (clathrin adapter protein complex 2), internalization through clathrin coated pits, and subsequent transport to endosomes and lysosomes for degradation. Diverts host MHC-I molecules to the trans-Golgi network-associated endosomal compartments by an endocytic pathway to finally target them for degradation. MHC-I down-regulation may involve AP-1 (clathrin adapter protein complex 1) or possibly Src family kinase-ZAP70/Syk-PI3K cascade recruited by PACS2. In consequence infected cells are masked for immune recognition by cytotoxic T-lymphocytes. Decreasing the number of immune receptors also prevents reinfection by more HIV particles (superinfection). Down-regulates host SERINC3 and SERINC5 thereby excluding these proteins from the viral particles. Virion infectivity is drastically higher when SERINC3 or SERINC5 are excluded from the viral envelope, because these host antiviral proteins impair the membrane fusion event necessary for subsequent virion penetration. Its function is as follows. Bypasses host T-cell signaling by inducing a transcriptional program nearly identical to that of anti-CD3 cell activation. Interaction with TCR-zeta chain up-regulates the Fas ligand (FasL). Increasing surface FasL molecules and decreasing surface MHC-I molecules on infected CD4(+) cells send attacking cytotoxic CD8+ T-lymphocytes into apoptosis. In terms of biological role, plays a role in optimizing the host cell environment for viral replication without causing cell death by apoptosis. Protects the infected cells from apoptosis in order to keep them alive until the next virus generation is ready to strike. Inhibits the Fas and TNFR-mediated death signals by blocking MAP3K5/ASK1. Decreases the half-life of TP53, protecting the infected cell against p53-mediated apoptosis. Inhibits the apoptotic signals regulated by the Bcl-2 family proteins through the formation of a Nef/PI3-kinase/PAK2 complex that leads to activation of PAK2 and induces phosphorylation of host BAD. Functionally, extracellular Nef protein targets CD4(+) T-lymphocytes for apoptosis by interacting with CXCR4 surface receptors. The protein is Protein Nef of Homo sapiens (Human).